Here is a 213-residue protein sequence, read N- to C-terminus: Inactive ribonuclease-like protein 10 (213 aa).

Residues 1–24 form the signal peptide; it reads MKLTLVQFFFMMLLLLLGLGVGLG. Residue N128 is glycosylated (N-linked (GlcNAc...) asparagine).

Belongs to the pancreatic ribonuclease family. In terms of processing, the N-terminus is blocked. Glycosylated. In terms of tissue distribution, male-specific expression in proximal caput of the epididymis.

It is found in the secreted. Its function is as follows. Secreted proximal epididymal protein required for post-testicular sperm maturation and male fertility. May be involved in sperm adhesion to the egg zona pellucida. Does not have ribonuclease activity. In Sus scrofa (Pig), this protein is Inactive ribonuclease-like protein 10 (RNASE10).